The primary structure comprises 841 residues: Microcephalin (841 aa).

A BRCT 1 domain is found at 1–93 (MAAPILKDVV…AHIDESLFPA (93 aa)). Residues Ser278, Ser286, Ser295, and Ser332 each carry the phosphoserine modification. Thr334 is modified (phosphothreonine). 4 disordered regions span residues 340 to 375 (GHLLIHSRPRSSSVKRKRVSYGFHSPPKEKCKRKRS), 417 to 445 (PDNLKERNSENLPPESQLPSSPAQFSCRS), 481 to 507 (SSPQKTANGEGRATLSGVTSEESSAPE), and 562 to 593 (VGLKSTQDKGTTSKISNSSEGEASSEHEPRSV). Over residues 342-358 (LLIHSRPRSSSVKRKRV) the composition is skewed to basic residues. The segment covering 433–445 (QLPSSPAQFSCRS) has biased composition (polar residues). The segment covering 565–583 (KSTQDKGTTSKISNSSEGE) has biased composition (polar residues). BRCT domains are found at residues 646-736 (SGKG…SFEL) and 757-839 (YRGT…NYLL).

Interacts with CDC27 and maybe other components of the APC/C complex. Interacts with histone variant H2AX under DNA damage conditions.

It is found in the cytoplasm. The protein resides in the cytoskeleton. It localises to the microtubule organizing center. The protein localises to the centrosome. Functionally, implicated in chromosome condensation and DNA damage induced cellular responses. May play a role in neurogenesis and regulation of the size of the cerebral cortex. The polypeptide is Microcephalin (Colobus guereza (Mantled guereza)).